The following is a 182-amino-acid chain: Peptidoglycan recognition protein 1 (182 aa).

The signal sequence occupies residues 1–18 (MLFACALLALLGLATSCS). 3 disulfide bridges follow: cysteine 17–cysteine 141, cysteine 33–cysteine 78, and cysteine 54–cysteine 60. Residues 39–167 (HPVRYVVISH…RDVQSTLSPG (129 aa)) enclose the N-acetylmuramoyl-L-alanine amidase domain.

Belongs to the N-acetylmuramoyl-L-alanine amidase 2 family. As to quaternary structure, homodimer; disulfide-linked. Interacts with HSPA1A; this interaction forms a cytotoxic complex that is released by lymphokine-activated killer cells. Interacts with HSPBP1; this interaction blocks the cytotoxic activity of the PGLYRP1-HSPA1A complex. Strongly expressed in spleen and lung. Also detected in brain and thymus. In the lung, expressed in the intraalveolar space, in the brain, expressed in the Purkinje cells of the cerebellum and in certain layers of neurons in the hippocampus. Also detected in cells filling the space within the intestinal villus.

The protein localises to the cytoplasm. It is found in the secreted. Its function is as follows. Innate immunity protein that plays several important functions in antimicrobial and antitumor defense systems. Acts as a pattern receptor that binds to murein peptidoglycans (PGN) of Gram-positive bacteria and thus provides bactericidal activity. Forms an equimolar complex with heat shock protein HSPA1A and induces programmed cell death through apoptosis and necroptosis in tumor cell lines by activating the TNFR1 receptor on the target cell membrane. In addition, acts in complex with the Ca(2+)-binding protein S100A4 as a chemoattractant able to induce lymphocyte movement. Mechanistically, this complex acts as a ligand of the chemotactic receptors CCR5 and CXCR3 which are present on the cells of the immune system. Also promotes the activation of lymphocytes that become able to kill virus-infected cells as well as tumor cells by modulating the spectrum of their target-cell specificity. Induction of cytotoxicity on monocyte surface requires interaction with TREM1 receptor. The chain is Peptidoglycan recognition protein 1 (Pglyrp1) from Mus musculus (Mouse).